A 72-amino-acid chain; its full sequence is Large ribosomal subunit protein bL31 (72 aa).

Zn(2+)-binding residues include Cys16, Cys18, Cys37, and Cys40.

Belongs to the bacterial ribosomal protein bL31 family. Type A subfamily. Part of the 50S ribosomal subunit. The cofactor is Zn(2+).

Functionally, binds the 23S rRNA. The chain is Large ribosomal subunit protein bL31 from Buchnera aphidicola subsp. Schizaphis graminum (strain Sg).